The primary structure comprises 86 residues: Small ribosomal subunit protein uS17 (86 aa).

It belongs to the universal ribosomal protein uS17 family. As to quaternary structure, part of the 30S ribosomal subunit.

In terms of biological role, one of the primary rRNA binding proteins, it binds specifically to the 5'-end of 16S ribosomal RNA. The chain is Small ribosomal subunit protein uS17 from Halorhodospira halophila (strain DSM 244 / SL1) (Ectothiorhodospira halophila (strain DSM 244 / SL1)).